A 97-amino-acid polypeptide reads, in one-letter code: Large ribosomal subunit protein eL21 (97 aa).

This sequence belongs to the eukaryotic ribosomal protein eL21 family.

The sequence is that of Large ribosomal subunit protein eL21 from Methanosarcina barkeri (strain Fusaro / DSM 804).